Here is a 677-residue protein sequence, read N- to C-terminus: Pannexin-2 (677 aa).

Over M11 to V53 the chain is Cytoplasmic. A helical membrane pass occupies residues V54–F74. Residues A75 to P125 are Extracellular-facing. N86 is a glycosylation site (N-linked (GlcNAc...) asparagine). A helical membrane pass occupies residues Y126–A146. The Cytoplasmic segment spans residues S147–R230. The chain crosses the membrane as a helical span at residues H231–T251. Residues Q252 to D295 are Extracellular-facing. A helical transmembrane segment spans residues I296–F316. Topologically, residues R317–L617 are cytoplasmic. Residues T394–P408 are compositionally biased toward polar residues. Disordered regions lie at residues T394–K425 and A485–H512. Phosphoserine is present on residues S593 and S604.

The protein belongs to the pannexin family. In terms of assembly, homoheptameric. Post-translationally, S-palmitoylated in neural stem and progenitor cells. In terms of processing, cleaved by CASP3 and CASP7 during apoptosis. Cleavage has no effect on it function. As to expression, expression is enriched in central nervous system. Expressed in suprabasal layers of skin epidermis. In terms of tissue distribution, more aboundantly expressed in skin.

Its subcellular location is the cell membrane. It localises to the golgi apparatus membrane. The protein resides in the endoplasmic reticulum membrane. It catalyses the reaction ATP(in) = ATP(out). The enzyme catalyses chloride(in) = chloride(out). It carries out the reaction iodide(out) = iodide(in). The catalysed reaction is Na(+)(in) = Na(+)(out). It catalyses the reaction D-gluconate(in) = D-gluconate(out). Ion channel with a slight anion preference. Also able to release ATP. Plays a role in regulating neurogenesis and apoptosis in keratinocytes. This is Pannexin-2 (Panx2) from Mus musculus (Mouse).